Consider the following 476-residue polypeptide: Probable isoprenylcysteine alpha-carbonyl methylesterase ICMEL1 (476 aa).

Residues 92–104 (NCLSAFSDDTNGT) show a composition bias toward polar residues. The segment at 92 to 116 (NCLSAFSDDTNGTADGGNNSGDRQT) is disordered. 2 helical membrane-spanning segments follow: residues 153–173 (FMAL…VGYY) and 208–228 (VVAF…GSLL). Residues 214–216 (GGA) and 285–287 (QSA) each bind substrate. Catalysis depends on residues Ser286, Asp388, and His420.

This sequence belongs to the AB hydrolase superfamily. Isoprenylcysteine methylesterase family. In terms of tissue distribution, expressed in roots, rosette and cauline leaves, stems, flowers and siliques.

The protein resides in the endoplasmic reticulum membrane. It localises to the golgi apparatus membrane. It carries out the reaction [protein]-C-terminal S-[(2E,6E)-farnesyl]-L-cysteine methyl ester + H2O = [protein]-C-terminal S-[(2E,6E)-farnesyl]-L-cysteine + methanol + H(+). Its function is as follows. Catalyzes the demethylation of isoprenylcysteine methylesters. May be involved in the regulation of ABA signaling. This Arabidopsis thaliana (Mouse-ear cress) protein is Probable isoprenylcysteine alpha-carbonyl methylesterase ICMEL1.